The chain runs to 90 residues: Small ribosomal subunit protein uS19 (90 aa).

It belongs to the universal ribosomal protein uS19 family.

Functionally, protein S19 forms a complex with S13 that binds strongly to the 16S ribosomal RNA. The sequence is that of Small ribosomal subunit protein uS19 from Mesomycoplasma hyopneumoniae (strain 232) (Mycoplasma hyopneumoniae).